We begin with the raw amino-acid sequence, 743 residues long: Elongation factor 2 (743 aa).

In terms of domain architecture, tr-type G spans 19 to 265; that stretch reads NNIRNIGIIA…MVVRHLPSPK (247 aa). GTP is bound by residues 28–35, 94–98, and 148–151; these read AHIHHGKT, DTPGH, and NKVD. H615 is modified (diphthamide).

The protein belongs to the TRAFAC class translation factor GTPase superfamily. Classic translation factor GTPase family. EF-G/EF-2 subfamily.

Its subcellular location is the cytoplasm. Catalyzes the GTP-dependent ribosomal translocation step during translation elongation. During this step, the ribosome changes from the pre-translocational (PRE) to the post-translocational (POST) state as the newly formed A-site-bound peptidyl-tRNA and P-site-bound deacylated tRNA move to the P and E sites, respectively. Catalyzes the coordinated movement of the two tRNA molecules, the mRNA and conformational changes in the ribosome. The polypeptide is Elongation factor 2 (Nanoarchaeum equitans (strain Kin4-M)).